Here is a 329-residue protein sequence, read N- to C-terminus: Ribosomal RNA small subunit methyltransferase H (329 aa).

Residues 34-36, aspartate 59, phenylalanine 86, aspartate 112, and glutamine 119 contribute to the S-adenosyl-L-methionine site; that span reads GGH.

The protein belongs to the methyltransferase superfamily. RsmH family.

The protein resides in the cytoplasm. The catalysed reaction is cytidine(1402) in 16S rRNA + S-adenosyl-L-methionine = N(4)-methylcytidine(1402) in 16S rRNA + S-adenosyl-L-homocysteine + H(+). In terms of biological role, specifically methylates the N4 position of cytidine in position 1402 (C1402) of 16S rRNA. The chain is Ribosomal RNA small subunit methyltransferase H from Chlorobium phaeobacteroides (strain DSM 266 / SMG 266 / 2430).